A 156-amino-acid chain; its full sequence is Small ribosomal subunit protein uS7 (156 aa).

It belongs to the universal ribosomal protein uS7 family. As to quaternary structure, part of the 30S ribosomal subunit. Contacts proteins S9 and S11.

One of the primary rRNA binding proteins, it binds directly to 16S rRNA where it nucleates assembly of the head domain of the 30S subunit. Is located at the subunit interface close to the decoding center, probably blocks exit of the E-site tRNA. This Chromohalobacter salexigens (strain ATCC BAA-138 / DSM 3043 / CIP 106854 / NCIMB 13768 / 1H11) protein is Small ribosomal subunit protein uS7.